The chain runs to 398 residues: Trans-2-enoyl-CoA reductase [NADH] (398 aa).

NAD(+) contacts are provided by residues 47–52, 74–75, 111–112, and 139–140; these read GASSGF, YE, DA, and LA. Tyr-225 is a binding site for substrate. Residue Tyr-235 is the Proton donor of the active site. NAD(+) contacts are provided by residues Lys-244 and 274-276; that span reads LVT.

It belongs to the TER reductase family. In terms of assembly, monomer.

It catalyses the reaction a 2,3-saturated acyl-CoA + NAD(+) = a (2E)-enoyl-CoA + NADH + H(+). It participates in lipid metabolism; fatty acid biosynthesis. Its function is as follows. Involved in the fatty acid synthesis (FAS II). Catalyzes the reduction of the carbon-carbon double bond of crotonyl-CoA to yield butyryl-CoA. The polypeptide is Trans-2-enoyl-CoA reductase [NADH] (Clostridium acetobutylicum (strain ATCC 824 / DSM 792 / JCM 1419 / IAM 19013 / LMG 5710 / NBRC 13948 / NRRL B-527 / VKM B-1787 / 2291 / W)).